Here is a 459-residue protein sequence, read N- to C-terminus: MSFTLAIIGRPNVGKSTLFNRLVGQKLALVDDAPGVTRDRREGEGRLGDLNFTLIDTAGLDEGPKGSLTARMQEQTETAIELADALLFVFDARAGLTPNDRAFADFARRANKPVVLVANKSEGKSGEIGAMESYALGLGDPVQISAEHGEGMGELYDALRPLLPEPVEDEEDDEPADQSEEAIATRPIRVAIVGRPNAGKSTFINRLLGEERLLTSPEAGTTRDSIAVEVEWKGRDFRVFDTAGLRRRSRIEEKLEKLSVADALRAVRFAEVVVLMMDAQNRFEEQDLRIADLVEREGRALVIAVNKWDLIERQGGQIAQLRTDADHWLPQIKGVPIVATSGMLGEGVDRLMQAIQDAYAVWNRRVPTAALNRWFEQAISQNPPPAVSGRRLKLNYVTQTKARPPSFVVFCSRADAVPESYLRYLVNSLRGAFDLPGTPVRITLREKANPFAHKRKRKS.

EngA-type G domains follow at residues 3-167 (FTLA…PEPV) and 188-363 (IRVA…AVWN). GTP contacts are provided by residues 9–16 (GRPNVGKS), 56–60 (DTAGL), 119–122 (NKSE), 194–201 (GRPNAGKS), 241–245 (DTAGL), and 306–309 (NKWD). Residues 364-448 (RRVPTAALNR…PVRITLREKA (85 aa)) enclose the KH-like domain.

Belongs to the TRAFAC class TrmE-Era-EngA-EngB-Septin-like GTPase superfamily. EngA (Der) GTPase family. As to quaternary structure, associates with the 50S ribosomal subunit.

GTPase that plays an essential role in the late steps of ribosome biogenesis. The protein is GTPase Der of Rhodopseudomonas palustris (strain TIE-1).